A 237-amino-acid polypeptide reads, in one-letter code: Cuticlin-like protein 19 (237 aa).

The first 20 residues, 1 to 20, serve as a signal peptide directing secretion; it reads MVEYNRIFCVLVIFSTTIKC.

As to quaternary structure, interacts with vps-51 and vps-52. In terms of tissue distribution, expression detected in motor neurons.

The protein localises to the golgi apparatus. It localises to the trans-Golgi network. This Caenorhabditis elegans protein is Cuticlin-like protein 19 (cutl-19).